We begin with the raw amino-acid sequence, 136 residues long: MLQPKRTKFRKMMKGRNRGLATGHKVSFGEIGLQAVGRCRLSARQIESARRAMTRHVKRQGKIWIRVFPDKPVTKKPLEVRMGKGKGSVEYWVAKIKPGQMLFEMQGVEETVAIEAFALASGKLPVKTTIIKRTVM.

This sequence belongs to the universal ribosomal protein uL16 family. Part of the 50S ribosomal subunit.

Functionally, binds 23S rRNA and is also seen to make contacts with the A and possibly P site tRNAs. In Vesicomyosocius okutanii subsp. Calyptogena okutanii (strain HA), this protein is Large ribosomal subunit protein uL16.